A 428-amino-acid polypeptide reads, in one-letter code: Serine--tRNA ligase (428 aa).

L-serine is bound at residue Thr231–Glu233. Arg262–Glu264 contacts ATP. Glu285 serves as a coordination point for L-serine. Glu349–Ser352 is an ATP binding site. Ser385 provides a ligand contact to L-serine.

This sequence belongs to the class-II aminoacyl-tRNA synthetase family. Type-1 seryl-tRNA synthetase subfamily. In terms of assembly, homodimer. The tRNA molecule binds across the dimer.

Its subcellular location is the cytoplasm. The enzyme catalyses tRNA(Ser) + L-serine + ATP = L-seryl-tRNA(Ser) + AMP + diphosphate + H(+). It catalyses the reaction tRNA(Sec) + L-serine + ATP = L-seryl-tRNA(Sec) + AMP + diphosphate + H(+). Its pathway is aminoacyl-tRNA biosynthesis; selenocysteinyl-tRNA(Sec) biosynthesis; L-seryl-tRNA(Sec) from L-serine and tRNA(Sec): step 1/1. Catalyzes the attachment of serine to tRNA(Ser). Is also able to aminoacylate tRNA(Sec) with serine, to form the misacylated tRNA L-seryl-tRNA(Sec), which will be further converted into selenocysteinyl-tRNA(Sec). This chain is Serine--tRNA ligase, found in Staphylococcus haemolyticus (strain JCSC1435).